The primary structure comprises 468 residues: MSELVLARIQFASTTLFHFLFVPMSIGLVFMVALMETLYLVKKNELYLKMAKFWGHLFLINFAVGVVTGILQEFQFGLNWSDYSRFVGDVFGAPLAIEALLAFFMESIFIGLWIFGWDRLPKKIHALCIWLVSFGTIMSSFWILTANSFMQEPVGFTIKNGRAEMNDFGALITNPQLWVEFPHVIFGALATGAFFIAGVSAFKLLKKKEVPFFKQSFKLAMIVGLCAGLGVGLSGHMQAEHLMESQPMKMAASEGLWEDSGDPAAWTAFATIDTKNEKSSNEIKVPYALSYLAYQKFSGSVKGMKTLQAEYEKIYGKGDYIPPVKTTFWSFRIMVGAGVVMILAALGGLWLNRRKKLENSKWYLRIMIALISFPFLANSAGWIMTEIGRQPWTVMGLMTTAQSVSPNVTAGSLLFSIIAFGVMYMILGALLVFLFIREIKKGAEHDNHHDVPVSTDPFSQEVYHGISS.

Transmembrane regions (helical) follow at residues 15 to 35 (TLFH…VALM), 51 to 71 (AKFW…TGIL), 95 to 115 (LAIE…LWIF), 124 to 144 (IHAL…FWIL), 177 to 197 (LWVE…FFIA), 219 to 239 (LAMI…HMQA), 331 to 351 (FRIM…GLWL), 366 to 386 (IMIA…IMTE), and 416 to 436 (SIIA…FLFI). H18 serves as a coordination point for heme b. Position 183 (H183) interacts with heme b. M334 contacts heme b. The segment at 448–468 (HHDVPVSTDPFSQEVYHGISS) is disordered.

This sequence belongs to the cytochrome ubiquinol oxidase subunit 1 family. Heterodimer of subunits I and II. Requires heme b as cofactor. The cofactor is heme d cis-diol.

Its subcellular location is the cell membrane. The enzyme catalyses 2 a ubiquinol + O2(in) + 4 H(+)(in) = 2 a ubiquinone + 2 H2O(in) + 4 H(+)(out). The sequence is that of Cytochrome bd ubiquinol oxidase subunit 1 (cydA) from Bacillus subtilis (strain 168).